The sequence spans 616 residues: Protein SpAN (616 aa).

The N-terminal stretch at 1–16 (MKLVLLLAGFAALAKC) is a signal peptide. The propeptide at 17–93 (SLAAPAGVQK…DQKAGRKKRK (77 aa)) is activation peptide. Residues 30–67 (METSAPEKPSEATTLGLLKTPKPEPKDEEPSPGAFQGD) form a disordered region. The 202-residue stretch at 93-294 (KATIYESQRW…ELANRIYECD (202 aa)) folds into the Peptidase M12A domain. Disulfide bonds link Cys-134–Cys-293, Cys-162–Cys-182, Cys-299–Cys-317, Cys-319–Cys-328, Cys-340–Cys-366, and Cys-393–Cys-413. His-190 serves as a coordination point for Zn(2+). Residue Glu-191 is part of the active site. Zn(2+) is bound by residues His-194 and His-200. One can recognise an EGF-like domain in the interval 289–329 (RIYECDDVEDCSNADECLNGGYHDADCDCVCPSSYSGDLCQ). The 111-residue stretch at 340 to 450 (CSYRFTEMTG…RGFKATYVII (111 aa)) folds into the CUB 1 domain. Positions 461-491 (TLQTTPPSTTTLQTTNPSTTTLQTTNPSTTT) are disordered. Intrachain disulfides connect Cys-503/Cys-529 and Cys-556/Cys-576. Residues 503-614 (CGGTFVGVEG…RGFVASYRAI (112 aa)) enclose the CUB 2 domain.

It depends on Zn(2+) as a cofactor. As to expression, asymmetrically along the animal-vegetal axis of the blastula.

This chain is Protein SpAN (SPAN), found in Strongylocentrotus purpuratus (Purple sea urchin).